We begin with the raw amino-acid sequence, 416 residues long: Serine hydroxymethyltransferase (416 aa).

(6S)-5,6,7,8-tetrahydrofolate contacts are provided by residues leucine 121 and 125 to 127 (GHL). The residue at position 229 (lysine 229) is an N6-(pyridoxal phosphate)lysine.

Belongs to the SHMT family. Homodimer. Pyridoxal 5'-phosphate is required as a cofactor.

The protein localises to the cytoplasm. The catalysed reaction is (6R)-5,10-methylene-5,6,7,8-tetrahydrofolate + glycine + H2O = (6S)-5,6,7,8-tetrahydrofolate + L-serine. It participates in one-carbon metabolism; tetrahydrofolate interconversion. Its pathway is amino-acid biosynthesis; glycine biosynthesis; glycine from L-serine: step 1/1. Its function is as follows. Catalyzes the reversible interconversion of serine and glycine with tetrahydrofolate (THF) serving as the one-carbon carrier. This reaction serves as the major source of one-carbon groups required for the biosynthesis of purines, thymidylate, methionine, and other important biomolecules. Also exhibits THF-independent aldolase activity toward beta-hydroxyamino acids, producing glycine and aldehydes, via a retro-aldol mechanism. In Aromatoleum aromaticum (strain DSM 19018 / LMG 30748 / EbN1) (Azoarcus sp. (strain EbN1)), this protein is Serine hydroxymethyltransferase.